The following is a 293-amino-acid chain: uncharacterized protein (293 aa).

Disordered regions lie at residues 1-95 (MFLR…KDKA) and 268-293 (EETA…GRAL). Residues Ser34, Ser35, and Ser89 each carry the phosphoserine modification. Composition is skewed to basic and acidic residues over residues 85-95 (KRMDSLKKDKA) and 277-286 (GQGKEAKEQT).

This is an uncharacterized protein from Rattus norvegicus (Rat).